The primary structure comprises 317 residues: Putative HTH-type transcriptional regulatory protein TGAM_1316 (317 aa).

An HTH cro/C1-type domain is found at 131–189 (LKKLREKHGYSVGELASLLGVSRKSLLNYERNEQAVSLEVALRMEELFDEPIAEPIDVL). Residues 142-161 (VGELASLLGVSRKSLLNYER) constitute a DNA-binding region (H-T-H motif).

This chain is Putative HTH-type transcriptional regulatory protein TGAM_1316, found in Thermococcus gammatolerans (strain DSM 15229 / JCM 11827 / EJ3).